The sequence spans 444 residues: Argininosuccinate synthase (444 aa).

ATP-binding positions include 18 to 26 (AFSGGLDTS) and alanine 44. Tyrosine 100 is an L-citrulline binding site. 2 residues coordinate ATP: glycine 130 and threonine 132. The L-aspartate site is built by threonine 132, asparagine 136, and aspartate 137. Residue asparagine 136 participates in L-citrulline binding. ATP is bound at residue aspartate 137. L-citrulline-binding residues include arginine 140 and serine 193. Aspartate 195 provides a ligand contact to ATP. 3 residues coordinate L-citrulline: threonine 202, glutamate 204, and glutamate 281.

This sequence belongs to the argininosuccinate synthase family. Type 2 subfamily. Homotetramer.

The protein resides in the cytoplasm. It carries out the reaction L-citrulline + L-aspartate + ATP = 2-(N(omega)-L-arginino)succinate + AMP + diphosphate + H(+). Its pathway is amino-acid biosynthesis; L-arginine biosynthesis; L-arginine from L-ornithine and carbamoyl phosphate: step 2/3. This is Argininosuccinate synthase from Histophilus somni (strain 2336) (Haemophilus somnus).